An 850-amino-acid chain; its full sequence is RPA-related protein RADX (850 aa).

The segment at Met1–Gly31 is disordered. The segment at residues Trp228–Asn331 is a DNA-binding region (OB). 2 disordered regions span residues Glu575–Gln612 and Gly632–Arg671. The span at Gly590 to Pro608 shows a compositional bias: basic and acidic residues. Polar residues predominate over residues Pro643–Gly668.

The protein resides in the chromosome. In terms of biological role, single-stranded DNA-binding protein recruited to replication forks to maintain genome stability. Prevents fork collapse by antagonizing the accumulation of RAD51 at forks to ensure the proper balance of fork remodeling and protection without interfering with the capacity of cells to complete homologous recombination of double-strand breaks. This Mus musculus (Mouse) protein is RPA-related protein RADX.